Consider the following 297-residue polypeptide: Succinate dehydrogenase [ubiquinone] iron-sulfur subunit, mitochondrial (297 aa).

Residues lysine 47–methionine 140 form the 2Fe-2S ferredoxin-type domain. [2Fe-2S] cluster contacts are provided by cysteine 100, cysteine 105, cysteine 108, and cysteine 120. The 4Fe-4S ferredoxin-type domain occupies aspartate 185–tyrosine 215. [4Fe-4S] cluster is bound by residues cysteine 195, cysteine 198, and cysteine 201. Residue cysteine 205 coordinates [3Fe-4S] cluster. Tryptophan 210 provides a ligand contact to a ubiquinone. Residues cysteine 252 and cysteine 258 each coordinate [3Fe-4S] cluster. Cysteine 262 contacts [4Fe-4S] cluster.

Belongs to the succinate dehydrogenase/fumarate reductase iron-sulfur protein family. Component of complex II composed of four subunits: a flavoprotein (FP), an iron-sulfur protein (IP), and a cytochrome b composed of a large and a small subunit. It depends on [2Fe-2S] cluster as a cofactor. [3Fe-4S] cluster is required as a cofactor. [4Fe-4S] cluster serves as cofactor. In terms of tissue distribution, most abundant in the adult thorax and low in abdominal tissues.

It localises to the mitochondrion inner membrane. It carries out the reaction a quinone + succinate = fumarate + a quinol. The protein operates within carbohydrate metabolism; tricarboxylic acid cycle; fumarate from succinate (eukaryal route): step 1/1. Its function is as follows. Iron-sulfur protein (IP) subunit of succinate dehydrogenase (SDH) that is involved in complex II of the mitochondrial electron transport chain and is responsible for transferring electrons from succinate to ubiquinone (coenzyme Q). This Drosophila melanogaster (Fruit fly) protein is Succinate dehydrogenase [ubiquinone] iron-sulfur subunit, mitochondrial (SdhB).